The primary structure comprises 303 residues: Probable cell division protein WhiA (303 aa).

The H-T-H motif DNA-binding region spans 272-303 (SLQQIADSLDFAITKSGVNHRLRKINKLAEDL).

Belongs to the WhiA family.

Involved in cell division and chromosome segregation. In Streptococcus equi subsp. zooepidemicus (strain MGCS10565), this protein is Probable cell division protein WhiA.